We begin with the raw amino-acid sequence, 232 residues long: MGCLSVVGASPCVSSSALSSPTSRLSCAPSCKLILNPIKKNHHLAAFQPAVHLFASNQSRSHASKRNHTTRIFLPHLVASMEEVEETYIMIKPDGVQRGLVGEIISRFEKKGFKLTGLKLFHCPKELAEEHYKDLQSKPFFPKLIDYITSGPVVCMAWEGVGVVASARKLIGATNPLNAEPGTIRGDLAVQTGRNVVHGSDSPDNGKREIALWFGEGELCSWTPVQEPWLIE.

A chloroplast-targeting transit peptide spans 1–79 (MGCLSVVGAS…TRIFLPHLVA (79 aa)). Positions 92, 140, 168, 174, 185, and 195 each coordinate ATP. His198 acts as the Pros-phosphohistidine intermediate in catalysis.

This sequence belongs to the NDK family. It depends on Mg(2+) as a cofactor.

It is found in the plastid. The protein localises to the chloroplast. It catalyses the reaction a 2'-deoxyribonucleoside 5'-diphosphate + ATP = a 2'-deoxyribonucleoside 5'-triphosphate + ADP. The enzyme catalyses a ribonucleoside 5'-diphosphate + ATP = a ribonucleoside 5'-triphosphate + ADP. Major role in the synthesis of nucleoside triphosphates other than ATP. The ATP gamma phosphate is transferred to the NDP beta phosphate via a ping-pong mechanism, using a phosphorylated active-site intermediate. This chain is Nucleoside diphosphate kinase 2, chloroplastic, found in Nicotiana tabacum (Common tobacco).